Here is a 131-residue protein sequence, read N- to C-terminus: MRKTSLLNSNISSVISKMGHTDMLAIGDCGLPIPKETERIDLALIKGVPGFIETLKAILEELQVEEVLIAKETEKVSPELFTKIKEIIKDTKITFISHEELKKELKDCKAVVRTGEQTPYANIILKSGVVF.

The active-site Proton donor is the His-20. Substrate contacts are provided by residues Asp-28, His-98, and 120-122 (YAN).

Belongs to the RbsD / FucU family. RbsD subfamily. In terms of assembly, homodecamer.

The protein localises to the cytoplasm. It catalyses the reaction beta-D-ribopyranose = beta-D-ribofuranose. It functions in the pathway carbohydrate metabolism; D-ribose degradation; D-ribose 5-phosphate from beta-D-ribopyranose: step 1/2. Its function is as follows. Catalyzes the interconversion of beta-pyran and beta-furan forms of D-ribose. In Clostridium perfringens (strain SM101 / Type A), this protein is D-ribose pyranase.